The sequence spans 176 residues: Endoribonuclease YbeY (176 aa).

The Zn(2+) site is built by His-128, His-132, and His-138.

Belongs to the endoribonuclease YbeY family. The cofactor is Zn(2+).

It localises to the cytoplasm. Its function is as follows. Single strand-specific metallo-endoribonuclease involved in late-stage 70S ribosome quality control and in maturation of the 3' terminus of the 16S rRNA. In Zymomonas mobilis subsp. mobilis (strain ATCC 31821 / ZM4 / CP4), this protein is Endoribonuclease YbeY.